Reading from the N-terminus, the 457-residue chain is Multidrug resistance protein MdtK (457 aa).

Helical transmembrane passes span 11–31 (LLAL…MGFV), 53–73 (IWLP…PVIA), 93–113 (WLAG…GYII), 127–147 (AVGY…FQVA), 160–180 (GMVM…IFIY), 189–209 (GGVG…LAMV), 243–263 (LPIA…ALLV), 276–296 (IALN…AAVT), 314–334 (AART…IFTV), 350–370 (VVTL…SDSI), 387–407 (IFYI…YILA), and 418–438 (PAGF…MMML).

Belongs to the multi antimicrobial extrusion (MATE) (TC 2.A.66.1) family. MdtK subfamily.

Its subcellular location is the cell inner membrane. Functionally, multidrug efflux pump that functions probably as a Na(+)/drug antiporter. The sequence is that of Multidrug resistance protein MdtK from Escherichia coli O17:K52:H18 (strain UMN026 / ExPEC).